Reading from the N-terminus, the 311-residue chain is Energy-coupling factor transporter ATP-binding protein EcfA (311 aa).

Residues 2-237 form the ABC transporter domain; it reads IELRDLSYSY…AELIRRASLR (236 aa). 35 to 42 lines the ATP pocket; the sequence is GPNGAGKS.

This sequence belongs to the ABC transporter superfamily. Energy-coupling factor EcfA family. In terms of assembly, forms a stable energy-coupling factor (ECF) transporter complex composed of 2 membrane-embedded substrate-binding proteins (S component), 2 ATP-binding proteins (A component) and 2 transmembrane proteins (T component).

The protein localises to the cell membrane. In terms of biological role, ATP-binding (A) component of a common energy-coupling factor (ECF) ABC-transporter complex. Unlike classic ABC transporters this ECF transporter provides the energy necessary to transport a number of different substrates. The protein is Energy-coupling factor transporter ATP-binding protein EcfA of Methanothermobacter thermautotrophicus (strain ATCC 29096 / DSM 1053 / JCM 10044 / NBRC 100330 / Delta H) (Methanobacterium thermoautotrophicum).